The following is a 49-amino-acid chain: Large ribosomal subunit protein bL33B (49 aa).

It belongs to the bacterial ribosomal protein bL33 family.

In Bacillus licheniformis, this protein is Large ribosomal subunit protein bL33B (rpmGB).